Here is a 238-residue protein sequence, read N- to C-terminus: Opacity protein opA68 (238 aa).

A signal peptide is located at residue Ala-1. Positions 88–109 are disordered; sequence NLQRRTSNGNRRDRKTENQENG.

Belongs to the opacity porin family.

Its subcellular location is the cell outer membrane. Functionally, implicated in a number of adherence functions. OPA proteins are implicated in pathogenesis and are subject to phase variation. This chain is Opacity protein opA68, found in Neisseria gonorrhoeae.